A 216-amino-acid polypeptide reads, in one-letter code: Probable GTP-binding protein EngB (216 aa).

In terms of domain architecture, EngB-type G spans 37-214 (GSVEIAFAGR…RAAMIRLLDE (178 aa)). Residues 45–52 (GRSNVGKS), 72–76 (GRTQE), 92–95 (DMPG), 159–162 (TKAD), and 193–195 (TSS) each bind GTP. S52 and T74 together coordinate Mg(2+).

It belongs to the TRAFAC class TrmE-Era-EngA-EngB-Septin-like GTPase superfamily. EngB GTPase family. Mg(2+) is required as a cofactor.

Functionally, necessary for normal cell division and for the maintenance of normal septation. This Rhodopseudomonas palustris (strain TIE-1) protein is Probable GTP-binding protein EngB.